Reading from the N-terminus, the 530-residue chain is PC4 and SFRS1-interacting protein (530 aa).

The PWWP domain maps to 1–64; sequence MTRDFKPGDL…PKDIFPYSEN (64 aa). Residue Lys75 forms a Glycyl lysine isopeptide (Lys-Gly) (interchain with G-Cter in SUMO2) linkage. Residues 88 to 349 are disordered; the sequence is PKVKFSSQQA…VEKKRETSMD (262 aa). Residues 93–107 are compositionally biased toward low complexity; that stretch reads SSQQASAKQSNASSD. A phosphoserine mark is found at Ser102, Ser105, and Ser106. Over residues 113 to 135 the composition is skewed to basic and acidic residues; that stretch reads KETSVSKEDTDPEEKASNEDVTK. Residues Thr115 and Thr122 each carry the phosphothreonine modification. Ser129 carries the post-translational modification Phosphoserine. Thr141 is modified (phosphothreonine). Residues 144–153 show a composition bias toward basic residues; the sequence is AARRGRKRKA. Positions 146–156 match the Nuclear localization signal motif; the sequence is RRGRKRKAEKQ. Residue Thr167 is modified to Phosphothreonine. 2 positions are modified to phosphoserine: Ser177 and Ser206. A compositionally biased stretch (basic and acidic residues) spans 213–261; sequence EEDKSKKKGQEEKQPKKQLKKDEEGQKEEEKPRKEPDKKEGKKEVESKR. Position 271 is a phosphoserine (Ser271). Thr272 is subject to Phosphothreonine. 2 positions are modified to phosphoserine: Ser273 and Ser275. A compositionally biased stretch (acidic residues) spans 274–283; the sequence is DSEEEGDDQE. Positions 287 to 302 are enriched in basic residues; it reads KRKGGRNFQTAHRRNM. Over residues 305–349 the composition is skewed to basic and acidic residues; it reads GQHEKEAADRKRKQEEQMETEQQNKDEGKKPEVKKVEKKRETSMD. Coiled coils occupy residues 306–334 and 371–395; these read QHEK…EGKK and NRCI…KHTE. The tract at residues 340 to 417 is integrase-binding domain (IBD); it reads VEKKRETSMD…VSQVIMEKST (78 aa). Phosphoserine is present on Ser434. Phosphothreonine is present on Thr437. Ser443 bears the Phosphoserine mark. Residues 446 to 473 show a composition bias toward basic and acidic residues; it reads EQRQHEEANKTKDQGKKGPNKKLEKEQT. The interval 446 to 530 is disordered; it reads EQRQHEEANK…ISLKDSTLDN (85 aa). Residues 474–494 are compositionally biased toward polar residues; sequence GSKTLNGGSDAQDSNQPQHNG. Basic and acidic residues predominate over residues 498 to 530; sequence EESKDNHEASSKKKPSSEERETEISLKDSTLDN. Phosphoserine is present on Ser514. Arg517 carries the citrulline modification. Residue Ser522 is modified to Phosphoserine. Thr527 carries the post-translational modification Phosphothreonine.

The protein belongs to the HDGF family. As to quaternary structure, monomer. Interacts with IFRD1/PC4. Interacts (via IBD domain) with POGZ (via IBM motif) and CDCA7L (via IBM motifs). Interacts (via IBD domain) with KMT2A (via IBM motifs) with a moderate affinity whereas interacts with the KMT2A-MEN1 complex with a greater affinity; MEN1 enhances interaction of KMT2A with PSIP1. Interacts (via IBD domain) with IWS1 (via IBM motif), MED1 (via IBM motif) and DBF4 (via IBM motifs). Post-translationally, citrullinated by PADI4.

It is found in the nucleus. Transcriptional coactivator involved in neuroepithelial stem cell differentiation and neurogenesis. Involved in particular in lens epithelial cell gene regulation and stress responses. May play an important role in lens epithelial to fiber cell terminal differentiation. May play a protective role during stress-induced apoptosis. The polypeptide is PC4 and SFRS1-interacting protein (PSIP1) (Bos taurus (Bovine)).